Reading from the N-terminus, the 212-residue chain is Ribonuclease HII (212 aa).

The 206-residue stretch at 1 to 206 folds into the RNase H type-2 domain; it reads MARFGVDEAG…SRDALGAAEQ (206 aa). Residues aspartate 7, glutamate 8, and aspartate 100 each contribute to the a divalent metal cation site.

It belongs to the RNase HII family. Requires Mn(2+) as cofactor. Mg(2+) serves as cofactor.

The protein localises to the cytoplasm. It carries out the reaction Endonucleolytic cleavage to 5'-phosphomonoester.. Its function is as follows. Endonuclease that specifically degrades the RNA of RNA-DNA hybrids. This chain is Ribonuclease HII, found in Halobacterium salinarum (strain ATCC 29341 / DSM 671 / R1).